Here is a 431-residue protein sequence, read N- to C-terminus: Serine hydroxymethyltransferase 1 (431 aa).

(6S)-5,6,7,8-tetrahydrofolate is bound by residues L127 and 131 to 133 (GHL). K236 bears the N6-(pyridoxal phosphate)lysine mark. E252 is a binding site for (6S)-5,6,7,8-tetrahydrofolate.

This sequence belongs to the SHMT family. In terms of assembly, homodimer. Requires pyridoxal 5'-phosphate as cofactor.

The protein resides in the cytoplasm. The enzyme catalyses (6R)-5,10-methylene-5,6,7,8-tetrahydrofolate + glycine + H2O = (6S)-5,6,7,8-tetrahydrofolate + L-serine. It participates in one-carbon metabolism; tetrahydrofolate interconversion. Its pathway is amino-acid biosynthesis; glycine biosynthesis; glycine from L-serine: step 1/1. Catalyzes the reversible interconversion of serine and glycine with tetrahydrofolate (THF) serving as the one-carbon carrier. This reaction serves as the major source of one-carbon groups required for the biosynthesis of purines, thymidylate, methionine, and other important biomolecules. Also exhibits THF-independent aldolase activity toward beta-hydroxyamino acids, producing glycine and aldehydes, via a retro-aldol mechanism. The polypeptide is Serine hydroxymethyltransferase 1 (Rhizobium meliloti (strain 1021) (Ensifer meliloti)).